The sequence spans 692 residues: Elongation factor G (692 aa).

The tr-type G domain maps to 8–283; sequence DRYRNIGIMA…AVVDFLPSPL (276 aa). Residues 17-24, 81-85, and 135-138 each bind GTP; these read AHIDAGKT, DTPGH, and NKMD.

Belongs to the TRAFAC class translation factor GTPase superfamily. Classic translation factor GTPase family. EF-G/EF-2 subfamily.

It localises to the cytoplasm. In terms of biological role, catalyzes the GTP-dependent ribosomal translocation step during translation elongation. During this step, the ribosome changes from the pre-translocational (PRE) to the post-translocational (POST) state as the newly formed A-site-bound peptidyl-tRNA and P-site-bound deacylated tRNA move to the P and E sites, respectively. Catalyzes the coordinated movement of the two tRNA molecules, the mRNA and conformational changes in the ribosome. This is Elongation factor G from Rhodospirillum rubrum (strain ATCC 11170 / ATH 1.1.1 / DSM 467 / LMG 4362 / NCIMB 8255 / S1).